A 68-amino-acid chain; its full sequence is uncharacterized protein (68 aa).

The N-terminal stretch at 1 to 28 (MNKEQSADDPSVDLIRVKNMLNSTISMS) is a signal peptide.

This is an uncharacterized protein from Escherichia coli (strain K12).